We begin with the raw amino-acid sequence, 345 residues long: Mitochondrial metalloendopeptidase OMA1 (345 aa).

Residues 1 to 67 (MLRNIIRFKG…ILLDKSSRKY (67 aa)) are Mitochondrial matrix-facing. Residues 68 to 88 (LALLFGGCSLFYYTHLDKAPV) traverse the membrane as a helical segment. The Mitochondrial intermembrane segment spans residues 89–345 (SDRSRFIWVS…GNYYKSFFSM (257 aa)). His203 contributes to the Zn(2+) binding site. Glu204 is an active-site residue. Residues His207 and Glu257 each coordinate Zn(2+). Cys272 and Cys332 form a disulfide bridge. A required for protease activation region spans residues 314–345 (ENMSKWLPKANEIYEQSDCSSMGNYYKSFFSM).

Belongs to the peptidase M48 family. Homooligomer. It depends on Zn(2+) as a cofactor. Post-translationally, forms a redox-dependent disulfide bond, which plays a structural role and regulates its conformational stability and activity.

It localises to the mitochondrion inner membrane. Its activity is regulated as follows. Protease activity is induced in response to various mitochondrial stress, such as changes in membrane potential, oxidative stress or chronic hyperpolarization, and depends on its C-terminal region. Protease that is part of the quality control system in the inner membrane of mitochondria. Activated in response to various mitochondrial stress, leading to the proteolytic cleavage of target proteins, such as OXA1 and COX1. Cleaves and thereby promotes the turnover of mistranslated or misfolded membrane proteins. Cleaves the misfolded multi-pass membrane protein OXA1. Involved in quality control of cytochrome oxidase assembly: mediates the cleavage of COX1 in cells lacking COA2. Required for the stability of the respiratory supercomplexes. Required for TOR signaling. This Saccharomyces cerevisiae (strain ATCC 204508 / S288c) (Baker's yeast) protein is Mitochondrial metalloendopeptidase OMA1.